The sequence spans 239 residues: uncharacterized protein (239 aa).

This is an uncharacterized protein from Saccharomyces cerevisiae (strain ATCC 204508 / S288c) (Baker's yeast).